A 329-amino-acid polypeptide reads, in one-letter code: Phenylalanine--tRNA ligase alpha subunit (329 aa).

A Mg(2+)-binding site is contributed by Glu254.

It belongs to the class-II aminoacyl-tRNA synthetase family. Phe-tRNA synthetase alpha subunit type 1 subfamily. As to quaternary structure, tetramer of two alpha and two beta subunits. It depends on Mg(2+) as a cofactor.

It localises to the cytoplasm. The enzyme catalyses tRNA(Phe) + L-phenylalanine + ATP = L-phenylalanyl-tRNA(Phe) + AMP + diphosphate + H(+). This Mannheimia succiniciproducens (strain KCTC 0769BP / MBEL55E) protein is Phenylalanine--tRNA ligase alpha subunit.